The chain runs to 342 residues: 6-hydroxytryprostatin B O-methyltransferase (342 aa).

D201 provides a ligand contact to S-adenosyl-L-methionine. Residue H244 is the Proton acceptor of the active site.

Belongs to the class I-like SAM-binding methyltransferase superfamily. Cation-independent O-methyltransferase family. As to quaternary structure, homodimer.

The enzyme catalyses 6-hydroxytryprostatin B + S-adenosyl-L-methionine = tryprostatin A + S-adenosyl-L-homocysteine + H(+). It participates in mycotoxin biosynthesis. In terms of biological role, 6-hydroxytryprostatin B O-methyltransferase; part of the gene cluster that mediates the biosynthesis of fumitremorgins, indole alkaloids that carry not only intriguing chemical structures, but also interesting biological and pharmacological activities. The biosynthesis of fumitremorgin-type alkaloids begins by condensation of the two amino acids L-tryptophan and L-proline to brevianamide F, catalyzed by the non-ribosomal peptide synthetase ftmA. Brevianamide F is then prenylated by the prenyltransferase ftmPT1/ftmB in the presence of dimethylallyl diphosphate, resulting in the formation of tryprostatin B. The three cytochrome P450 monooxygenases, ftmP450-1/ftmC, ftmP450-2/ftmE and ftmP450-3/FtmG, are responsible for the conversion of tryprostatin B to 6-hydroxytryprostatin B, tryprostatin A to fumitremorgin C and fumitremorgin C to 12,13-dihydroxyfumitremorgin C, respectively. The putative methyltransferase ftmMT/ftmD is expected for the conversion of 6-hydroxytryprostatin B to tryprostatin A. FtmPT2/FtmH catalyzes the prenylation of 12,13-dihydroxyfumitre-morgin C in the presence of dimethylallyl diphosphate, resulting in the formation of fumitremorgin B. Fumitremorgin B is further converted to verruculogen by ftmOx1/ftmF via the insertion of an endoperoxide bond between the two prenyl moieties. In some fungal species, verruculogen is further converted to fumitremorgin A, but the enzymes involved in this step have not been identified yet. This chain is 6-hydroxytryprostatin B O-methyltransferase, found in Aspergillus fumigatus (strain ATCC MYA-4609 / CBS 101355 / FGSC A1100 / Af293) (Neosartorya fumigata).